We begin with the raw amino-acid sequence, 346 residues long: Holliday junction branch migration complex subunit RuvB (346 aa).

The interval 1–182 (MSEPARLISP…FGIPVRLSFY (182 aa)) is large ATPase domain (RuvB-L). Residues Leu21, Arg22, Gly63, Lys66, Thr67, Thr68, 129–131 (EDF), Arg172, Tyr182, and Arg219 each bind ATP. Thr67 contacts Mg(2+). The segment at 183 to 253 (TVEELELIVR…IADEALTRLL (71 aa)) is small ATPAse domain (RuvB-S). The segment at 256–346 (NVGFDQLDKR…AQFRLFQEDN (91 aa)) is head domain (RuvB-H). 3 residues coordinate DNA: Arg292, Arg311, and Arg316.

This sequence belongs to the RuvB family. In terms of assembly, homohexamer. Forms an RuvA(8)-RuvB(12)-Holliday junction (HJ) complex. HJ DNA is sandwiched between 2 RuvA tetramers; dsDNA enters through RuvA and exits via RuvB. An RuvB hexamer assembles on each DNA strand where it exits the tetramer. Each RuvB hexamer is contacted by two RuvA subunits (via domain III) on 2 adjacent RuvB subunits; this complex drives branch migration. In the full resolvosome a probable DNA-RuvA(4)-RuvB(12)-RuvC(2) complex forms which resolves the HJ.

It localises to the cytoplasm. The enzyme catalyses ATP + H2O = ADP + phosphate + H(+). In terms of biological role, the RuvA-RuvB-RuvC complex processes Holliday junction (HJ) DNA during genetic recombination and DNA repair, while the RuvA-RuvB complex plays an important role in the rescue of blocked DNA replication forks via replication fork reversal (RFR). RuvA specifically binds to HJ cruciform DNA, conferring on it an open structure. The RuvB hexamer acts as an ATP-dependent pump, pulling dsDNA into and through the RuvAB complex. RuvB forms 2 homohexamers on either side of HJ DNA bound by 1 or 2 RuvA tetramers; 4 subunits per hexamer contact DNA at a time. Coordinated motions by a converter formed by DNA-disengaged RuvB subunits stimulates ATP hydrolysis and nucleotide exchange. Immobilization of the converter enables RuvB to convert the ATP-contained energy into a lever motion, pulling 2 nucleotides of DNA out of the RuvA tetramer per ATP hydrolyzed, thus driving DNA branch migration. The RuvB motors rotate together with the DNA substrate, which together with the progressing nucleotide cycle form the mechanistic basis for DNA recombination by continuous HJ branch migration. Branch migration allows RuvC to scan DNA until it finds its consensus sequence, where it cleaves and resolves cruciform DNA. This Rhizobium johnstonii (strain DSM 114642 / LMG 32736 / 3841) (Rhizobium leguminosarum bv. viciae) protein is Holliday junction branch migration complex subunit RuvB.